The primary structure comprises 363 residues: MKGLILVGGYGTRLRPLTLTLPKPLVEFGNKPMILHQVESLAAAGVKDIVLAVNYRPEVMIETLKKYEEKYGVNITFSVETEPLGTAGPLKLAEEILCKDDTPFFVLNSDVICDYPFAELAEFHKKNNAEATIVATKVEEPSKYGVIVHKQGTSKIDRFVEKPVEFVGNRINAGIYILNPSVVDLIDLRPTSIEKETFPQLAARESLYSFDLEGYWMDVGQPKDFLSGTCLYLSSLSKKNPEALVPTSEPYVTGGNVLVDPTAKISPQAKIGPNVVIGPGAVIGEGARLSRCVVLANSTIKPHAFVKNSIIGWNGRVGRWARIENVSVFGDDVEVKDEVYVNGGRVLPHKTISGNIEKPEIIM.

Belongs to the transferase hexapeptide repeat family.

It localises to the cytoplasm. It carries out the reaction alpha-D-mannose 1-phosphate + GTP + H(+) = GDP-alpha-D-mannose + diphosphate. Its pathway is nucleotide-sugar biosynthesis; GDP-alpha-D-mannose biosynthesis; GDP-alpha-D-mannose from alpha-D-mannose 1-phosphate (GTP route): step 1/1. Its function is as follows. Involved in cell wall synthesis where it is required for glycosylation. Involved in cell cycle progression through cell-size checkpoint. This chain is Mannose-1-phosphate guanyltransferase (MPG1), found in Yarrowia lipolytica (strain CLIB 122 / E 150) (Yeast).